We begin with the raw amino-acid sequence, 484 residues long: Muscarinic acetylcholine receptor M4 (484 aa).

Residues 1-32 (MENDTWENESSASNHSIDETIVEIPGKYQTME) lie on the Extracellular side of the membrane. N-linked (GlcNAc...) asparagine glycosylation is found at Asn3, Asn8, and Asn14. A helical membrane pass occupies residues 33 to 55 (MIFIATVTGSLSLVTVVGNILVM). The Cytoplasmic portion of the chain corresponds to 56-69 (LSIKVNRQLQTVNN). The chain crosses the membrane as a helical span at residues 70–90 (YFLFSLACADLIIGVFSMNLY). At 91–107 (SLYIIKGYWPLGPIVCD) the chain is on the extracellular side. The cysteines at positions 106 and 186 are disulfide-linked. Residues 108-129 (LWLALDYVVSNASVMNLLIISL) form a helical membrane-spanning segment. Residues 130 to 149 (ERXFCVTKPLTYPARRTTKM) are Cytoplasmic-facing. Residues 150–172 (AGLMIAAAWLLSFELWAPAILFW) traverse the membrane as a helical segment. Residues 173-194 (QFIVGQRTVPSGECYIQFLSNP) are Extracellular-facing. Residues 195-217 (AVTFGTAIAAFYLPVVIMTILYI) form a helical membrane-spanning segment. At 218-406 (HISLASRSRV…AAREKKVTRT (189 aa)) the chain is on the cytoplasmic side. The interval 255 to 316 (NIPKQDAGDK…EKQPLSEASS (62 aa)) is disordered. Residues 260–270 (DAGDKVVEKKN) show a composition bias toward basic and acidic residues. Residues 407–427 (IFAILLAFIITWTPYNVMVLI) form a helical membrane-spanning segment. At 428-441 (NTFCQTCIPETIWY) the chain is on the extracellular side. The chain crosses the membrane as a helical span at residues 442–461 (IGYWLCYVNSTINPACYALC). Over 462–484 (NATFKKTFKHLLMCQYKSIGTAR) the chain is Cytoplasmic.

Belongs to the G-protein coupled receptor 1 family. Muscarinic acetylcholine receptor subfamily. CHRM4 sub-subfamily.

It localises to the cell membrane. The protein resides in the postsynaptic cell membrane. In terms of biological role, the muscarinic acetylcholine receptor mediates various cellular responses, including inhibition of adenylate cyclase, breakdown of phosphoinositides and modulation of potassium channels through the action of G proteins. Primary transducing effect is inhibition of adenylate cyclase. This Xenopus laevis (African clawed frog) protein is Muscarinic acetylcholine receptor M4 (chrm4).